Here is a 275-residue protein sequence, read N- to C-terminus: 3-methyl-2-oxobutanoate hydroxymethyltransferase (275 aa).

2 residues coordinate Mg(2+): D44 and D83. 3-methyl-2-oxobutanoate is bound by residues 44-45 (DS), D83, and K113. Residue E115 coordinates Mg(2+). E182 (proton acceptor) is an active-site residue.

Belongs to the PanB family. Homodecamer; pentamer of dimers. Mg(2+) serves as cofactor.

Its subcellular location is the cytoplasm. The catalysed reaction is 3-methyl-2-oxobutanoate + (6R)-5,10-methylene-5,6,7,8-tetrahydrofolate + H2O = 2-dehydropantoate + (6S)-5,6,7,8-tetrahydrofolate. It participates in cofactor biosynthesis; (R)-pantothenate biosynthesis; (R)-pantoate from 3-methyl-2-oxobutanoate: step 1/2. Catalyzes the reversible reaction in which hydroxymethyl group from 5,10-methylenetetrahydrofolate is transferred onto alpha-ketoisovalerate to form ketopantoate. The sequence is that of 3-methyl-2-oxobutanoate hydroxymethyltransferase from Clostridium beijerinckii (strain ATCC 51743 / NCIMB 8052) (Clostridium acetobutylicum).